The following is a 333-amino-acid chain: Acetoin:2,6-dichlorophenolindophenol oxidoreductase subunit alpha (333 aa).

Tetramer of 2 alpha and 2 beta subunits. Requires thiamine diphosphate as cofactor.

It participates in ketone degradation; acetoin degradation. Functionally, catalyzes the 2,6-dichlorophenolindophenol-dependent cleavage of acetoin into acetate and acetaldehyde. The alpha subunit is probably the catalytic subunit of the enzyme. In Bacillus subtilis (strain 168), this protein is Acetoin:2,6-dichlorophenolindophenol oxidoreductase subunit alpha (acoA).